The sequence spans 195 residues: BAG family molecular chaperone regulator 1A (195 aa).

The Ubiquitin-like domain occupies 6–72 (STVTIHYGNQ…KLGLKNHSKI (67 aa)). Residues 78 to 98 (HKQQRGSKEKDTVEPAPKAEA) are disordered. Basic and acidic residues predominate over residues 83 to 98 (GSKEKDTVEPAPKAEA). The BAG domain occupies 109-190 (EIKAIDQYVD…KMLDHVDQTS (82 aa)).

In terms of assembly, binds to the ATPase domain of HSP70/HSC chaperones.

Its function is as follows. Inhibits the chaperone activity of HSP70/HSC70 by promoting substrate release. This Schizosaccharomyces pombe (strain 972 / ATCC 24843) (Fission yeast) protein is BAG family molecular chaperone regulator 1A (bag101).